A 361-amino-acid chain; its full sequence is Probable cinnamyl alcohol dehydrogenase (361 aa).

Position 48 (cysteine 48) interacts with Zn(2+). Threonine 50 is an NADP(+) binding site. Zn(2+) is bound by residues histidine 70, glutamate 71, cysteine 101, cysteine 104, cysteine 107, cysteine 115, and cysteine 164. NADP(+) is bound by residues threonine 168, 189–194 (GLGGVG), 212–217 (SSSDKK), threonine 252, glycine 276, and 299–301 (SFI).

Belongs to the zinc-containing alcohol dehydrogenase family. Homodimer. Zn(2+) serves as cofactor.

It catalyses the reaction (E)-cinnamyl alcohol + NADP(+) = (E)-cinnamaldehyde + NADPH + H(+). It carries out the reaction (E)-coniferol + NADP(+) = (E)-coniferaldehyde + NADPH + H(+). The catalysed reaction is (E)-sinapyl alcohol + NADP(+) = (E)-sinapaldehyde + NADPH + H(+). The enzyme catalyses (E)-4-coumaroyl alcohol + NADP(+) = (E)-4-coumaraldehyde + NADPH + H(+). It catalyses the reaction (E)-caffeyl alcohol + NADP(+) = (E)-caffeyl aldehyde + NADPH + H(+). It functions in the pathway aromatic compound metabolism; phenylpropanoid biosynthesis. Involved in lignin biosynthesis. Catalyzes the final step specific for the production of lignin monomers. Catalyzes the NADPH-dependent reduction of coniferaldehyde, 5-hydroxyconiferaldehyde, sinapaldehyde, 4-coumaraldehyde and caffeyl aldehyde to their respective alcohols. In Lolium perenne (Perennial ryegrass), this protein is Probable cinnamyl alcohol dehydrogenase.